Consider the following 222-residue polypeptide: MQTFLYPRTWLILGLLLLGSGCAVTPKTITQVPNTARPAAPSQAVYNSGGIYSPATYRPLLEDKRARLVGDTIVINITENTSATKSGSNSASKSGAVNAGITGLFGHNVPKASFNAASDNAYDDAAASNSRNVFTGTISATVTEVLPNGHLVVSGEKQVAFDRGTEFVRFSGVVDPMYVAAGNSVPSSRVADARIEYRTNSNLDTAQVMSILTRFFLSFAPL.

The signal sequence occupies residues M1–G21. C22 is lipidated: N-palmitoyl cysteine. C22 is lipidated: S-diacylglycerol cysteine.

It belongs to the FlgH family. As to quaternary structure, the basal body constitutes a major portion of the flagellar organelle and consists of four rings (L,P,S, and M) mounted on a central rod.

It is found in the cell outer membrane. Its subcellular location is the bacterial flagellum basal body. Its function is as follows. Assembles around the rod to form the L-ring and probably protects the motor/basal body from shearing forces during rotation. The protein is Flagellar L-ring protein of Methylobacillus flagellatus (strain ATCC 51484 / DSM 6875 / VKM B-1610 / KT).